We begin with the raw amino-acid sequence, 271 residues long: 3-methyl-2-oxobutanoate hydroxymethyltransferase (271 aa).

Positions 51 and 90 each coordinate Mg(2+). 3-methyl-2-oxobutanoate contacts are provided by residues 51-52 (DS), Asp90, and Lys118. Glu120 contributes to the Mg(2+) binding site. Residue Glu186 is the Proton acceptor of the active site.

This sequence belongs to the PanB family. Homodecamer; pentamer of dimers. The cofactor is Mg(2+).

It localises to the cytoplasm. It carries out the reaction 3-methyl-2-oxobutanoate + (6R)-5,10-methylene-5,6,7,8-tetrahydrofolate + H2O = 2-dehydropantoate + (6S)-5,6,7,8-tetrahydrofolate. Its pathway is cofactor biosynthesis; (R)-pantothenate biosynthesis; (R)-pantoate from 3-methyl-2-oxobutanoate: step 1/2. Its function is as follows. Catalyzes the reversible reaction in which hydroxymethyl group from 5,10-methylenetetrahydrofolate is transferred onto alpha-ketoisovalerate to form ketopantoate. This Xanthomonas campestris pv. campestris (strain B100) protein is 3-methyl-2-oxobutanoate hydroxymethyltransferase.